The sequence spans 497 residues: Membrane-bound lytic murein transglycosylase F (497 aa).

The N-terminal stretch at 1-29 (MFFRPDFRPRCAKWLIATGLFLMLGACVE) is a signal peptide. Residues 30–267 (KPTTLERVKE…RLKDRYYGHV (238 aa)) form a non-LT domain region. Residues 268-497 (DVLGYVGAYT…PASSPEKPAL (230 aa)) are LT domain. The active site involves Glu-314. Residues 464-497 (VADGNLHVPGVDKTQPPAPTAPVVPASSPEKPAL) are disordered. Positions 486–497 (VVPASSPEKPAL) are enriched in low complexity.

In the N-terminal section; belongs to the bacterial solute-binding protein 3 family. The protein in the C-terminal section; belongs to the transglycosylase Slt family.

It is found in the cell outer membrane. The catalysed reaction is Exolytic cleavage of the (1-&gt;4)-beta-glycosidic linkage between N-acetylmuramic acid (MurNAc) and N-acetylglucosamine (GlcNAc) residues in peptidoglycan, from either the reducing or the non-reducing ends of the peptidoglycan chains, with concomitant formation of a 1,6-anhydrobond in the MurNAc residue.. In terms of biological role, murein-degrading enzyme that degrades murein glycan strands and insoluble, high-molecular weight murein sacculi, with the concomitant formation of a 1,6-anhydromuramoyl product. Lytic transglycosylases (LTs) play an integral role in the metabolism of the peptidoglycan (PG) sacculus. Their lytic action creates space within the PG sacculus to allow for its expansion as well as for the insertion of various structures such as secretion systems and flagella. This Pseudomonas syringae pv. tomato (strain ATCC BAA-871 / DC3000) protein is Membrane-bound lytic murein transglycosylase F.